Here is a 261-residue protein sequence, read N- to C-terminus: Ribosomal RNA small subunit methyltransferase J (261 aa).

S-adenosyl-L-methionine-binding positions include 111 to 112 (RD), 127 to 128 (ER), 163 to 164 (SS), and Asp-181.

This sequence belongs to the methyltransferase superfamily. RsmJ family.

The protein localises to the cytoplasm. The catalysed reaction is guanosine(1516) in 16S rRNA + S-adenosyl-L-methionine = N(2)-methylguanosine(1516) in 16S rRNA + S-adenosyl-L-homocysteine + H(+). Specifically methylates the guanosine in position 1516 of 16S rRNA. The polypeptide is Ribosomal RNA small subunit methyltransferase J (Shewanella sp. (strain MR-4)).